Consider the following 304-residue polypeptide: Ribonuclease BN (304 aa).

Zn(2+) contacts are provided by histidine 63, histidine 65, aspartate 67, histidine 68, histidine 140, aspartate 211, and histidine 269. Catalysis depends on aspartate 67, which acts as the Proton acceptor.

It belongs to the RNase Z family. RNase BN subfamily. In terms of assembly, homodimer. Zn(2+) serves as cofactor.

Functionally, zinc phosphodiesterase, which has both exoribonuclease and endoribonuclease activities. This is Ribonuclease BN from Erwinia tasmaniensis (strain DSM 17950 / CFBP 7177 / CIP 109463 / NCPPB 4357 / Et1/99).